The chain runs to 490 residues: UDP-N-acetylmuramoylalanine--D-glutamate ligase (490 aa).

Glycine 124–threonine 130 contacts ATP.

This sequence belongs to the MurCDEF family.

The protein resides in the cytoplasm. It carries out the reaction UDP-N-acetyl-alpha-D-muramoyl-L-alanine + D-glutamate + ATP = UDP-N-acetyl-alpha-D-muramoyl-L-alanyl-D-glutamate + ADP + phosphate + H(+). The protein operates within cell wall biogenesis; peptidoglycan biosynthesis. In terms of biological role, cell wall formation. Catalyzes the addition of glutamate to the nucleotide precursor UDP-N-acetylmuramoyl-L-alanine (UMA). In Mycobacterium leprae (strain TN), this protein is UDP-N-acetylmuramoylalanine--D-glutamate ligase (murD).